Here is a 385-residue protein sequence, read N- to C-terminus: 1-deoxy-D-xylulose 5-phosphate reductoisomerase (385 aa).

Residues T11, G12, S13, I14, N39, and N123 each contribute to the NADPH site. K124 is a binding site for 1-deoxy-D-xylulose 5-phosphate. E125 contributes to the NADPH binding site. D149 provides a ligand contact to Mn(2+). Residues S150, E151, S174, and H197 each contribute to the 1-deoxy-D-xylulose 5-phosphate site. E151 lines the Mn(2+) pocket. G203 contributes to the NADPH binding site. Residues S210, N215, K216, and E219 each coordinate 1-deoxy-D-xylulose 5-phosphate. E219 contacts Mn(2+).

The protein belongs to the DXR family. Mg(2+) is required as a cofactor. Mn(2+) serves as cofactor.

The enzyme catalyses 2-C-methyl-D-erythritol 4-phosphate + NADP(+) = 1-deoxy-D-xylulose 5-phosphate + NADPH + H(+). The protein operates within isoprenoid biosynthesis; isopentenyl diphosphate biosynthesis via DXP pathway; isopentenyl diphosphate from 1-deoxy-D-xylulose 5-phosphate: step 1/6. Its function is as follows. Catalyzes the NADPH-dependent rearrangement and reduction of 1-deoxy-D-xylulose-5-phosphate (DXP) to 2-C-methyl-D-erythritol 4-phosphate (MEP). The polypeptide is 1-deoxy-D-xylulose 5-phosphate reductoisomerase (Porphyromonas gingivalis (strain ATCC 33277 / DSM 20709 / CIP 103683 / JCM 12257 / NCTC 11834 / 2561)).